A 347-amino-acid chain; its full sequence is Eukaryotic translation initiation factor 3 subunit I (347 aa).

WD repeat units lie at residues 8–49 (GHER…GTYE), 50–89 (GHNG…CLFT), 146–186 (TFSG…PESG), 198–237 (AHTD…VIKT), 239–278 (ATET…GRFE), and 295–336 (GHFG…SKLY).

Belongs to the eIF-3 subunit I family. Component of the eukaryotic translation initiation factor 3 (eIF-3) complex.

It is found in the cytoplasm. In terms of biological role, component of the eukaryotic translation initiation factor 3 (eIF-3) complex, which is involved in protein synthesis of a specialized repertoire of mRNAs and, together with other initiation factors, stimulates binding of mRNA and methionyl-tRNAi to the 40S ribosome. The eIF-3 complex specifically targets and initiates translation of a subset of mRNAs involved in cell proliferation. The protein is Eukaryotic translation initiation factor 3 subunit I of Mycosarcoma maydis (Corn smut fungus).